The following is a 375-amino-acid chain: Phosphoglycerate kinase (375 aa).

Val1, Asp2, Phe3, Asn4, Arg17, Ser40, His41, Gly43, Arg44, Leu99, Arg100, His147, and Arg148 together coordinate (2R)-3-phosphoglycerate. Gly191 is an ADP binding site. Residue Gly191 coordinates CDP. Positions 192 and 193 each coordinate AMP. Position 192 (Ala192) interacts with ATP. Ala192 lines the Mg(2+) pocket. Asp196 is a binding site for CDP. Asp196 contributes to the Mg(2+) binding site. Position 197 (Lys197) interacts with AMP. Residue Lys197 coordinates ATP. Gly215 is an ADP binding site. Gly215 lines the CDP pocket. Gly216 and Gly290 together coordinate AMP. ATP contacts are provided by Gly216 and Gly290. Residues Gly315 and Phe320 each coordinate CDP. An ADP-binding site is contributed by Phe320. Glu321 provides a ligand contact to AMP. 3 residues coordinate ATP: Glu321, Asp352, and Thr353. Asp352 is a binding site for Mg(2+).

It belongs to the phosphoglycerate kinase family. Monomer. The cofactor is Mg(2+).

It carries out the reaction (2R)-3-phosphoglycerate + ATP = (2R)-3-phospho-glyceroyl phosphate + ADP. It participates in carbohydrate degradation; glycolysis; pyruvate from D-glyceraldehyde 3-phosphate: step 2/5. This is Phosphoglycerate kinase (PGK) from Tetrahymena pyriformis.